The chain runs to 103 residues: Co-chaperonin GroES (103 aa).

It belongs to the GroES chaperonin family. In terms of assembly, heptamer of 7 subunits arranged in a ring. Interacts with the chaperonin GroEL.

It is found in the cytoplasm. Functionally, together with the chaperonin GroEL, plays an essential role in assisting protein folding. The GroEL-GroES system forms a nano-cage that allows encapsulation of the non-native substrate proteins and provides a physical environment optimized to promote and accelerate protein folding. GroES binds to the apical surface of the GroEL ring, thereby capping the opening of the GroEL channel. This Prochlorococcus marinus (strain MIT 9211) protein is Co-chaperonin GroES.